We begin with the raw amino-acid sequence, 241 residues long: Proteasome subunit alpha (241 aa).

The protein belongs to the peptidase T1A family. In terms of assembly, the 20S proteasome core is composed of 14 alpha and 14 beta subunits that assemble into four stacked heptameric rings, resulting in a barrel-shaped structure. The two inner rings, each composed of seven catalytic beta subunits, are sandwiched by two outer rings, each composed of seven alpha subunits. The catalytic chamber with the active sites is on the inside of the barrel. Has a gated structure, the ends of the cylinder being occluded by the N-termini of the alpha-subunits. Is capped by the proteasome-associated ATPase, ARC.

Its subcellular location is the cytoplasm. It functions in the pathway protein degradation; proteasomal Pup-dependent pathway. With respect to regulation, the formation of the proteasomal ATPase ARC-20S proteasome complex, likely via the docking of the C-termini of ARC into the intersubunit pockets in the alpha-rings, may trigger opening of the gate for substrate entry. Interconversion between the open-gate and close-gate conformations leads to a dynamic regulation of the 20S proteasome proteolysis activity. Its function is as follows. Component of the proteasome core, a large protease complex with broad specificity involved in protein degradation. The polypeptide is Proteasome subunit alpha (Parafrankia sp. (strain EAN1pec)).